A 179-amino-acid polypeptide reads, in one-letter code: Large ribosomal subunit protein uL5 (179 aa).

The protein belongs to the universal ribosomal protein uL5 family. As to quaternary structure, part of the 50S ribosomal subunit; part of the 5S rRNA/L5/L18/L25 subcomplex. Contacts the 5S rRNA and the P site tRNA. Forms a bridge to the 30S subunit in the 70S ribosome.

This is one of the proteins that bind and probably mediate the attachment of the 5S RNA into the large ribosomal subunit, where it forms part of the central protuberance. In the 70S ribosome it contacts protein S13 of the 30S subunit (bridge B1b), connecting the 2 subunits; this bridge is implicated in subunit movement. Contacts the P site tRNA; the 5S rRNA and some of its associated proteins might help stabilize positioning of ribosome-bound tRNAs. This chain is Large ribosomal subunit protein uL5, found in Pelobacter propionicus (strain DSM 2379 / NBRC 103807 / OttBd1).